A 537-amino-acid chain; its full sequence is uncharacterized protein (537 aa).

Belongs to the RuBisCO large chain family. Type IV subfamily.

Functionally, unknown. Probably does not have RuBisCO activity. This is an uncharacterized protein from Symbiodinium sp. (Dinoflagellate).